The primary structure comprises 198 residues: Recombination protein RecR (198 aa).

Residues 57-72 (CSICGRLTDDDPCSIC) form a C4-type zinc finger. The 96-residue stretch at 80–175 (TTILVLEDSR…KVTRLARGLA (96 aa)) folds into the Toprim domain.

The protein belongs to the RecR family.

Its function is as follows. May play a role in DNA repair. It seems to be involved in an RecBC-independent recombinational process of DNA repair. It may act with RecF and RecO. This Streptococcus pneumoniae (strain 70585) protein is Recombination protein RecR.